Here is a 96-residue protein sequence, read N- to C-terminus: Co-chaperonin GroES (96 aa).

It belongs to the GroES chaperonin family. Heptamer of 7 subunits arranged in a ring. Interacts with the chaperonin GroEL.

It localises to the cytoplasm. Functionally, together with the chaperonin GroEL, plays an essential role in assisting protein folding. The GroEL-GroES system forms a nano-cage that allows encapsulation of the non-native substrate proteins and provides a physical environment optimized to promote and accelerate protein folding. GroES binds to the apical surface of the GroEL ring, thereby capping the opening of the GroEL channel. This chain is Co-chaperonin GroES, found in Dechloromonas aromatica (strain RCB).